We begin with the raw amino-acid sequence, 158 residues long: Ribosome maturation factor RimP (158 aa).

It belongs to the RimP family.

It localises to the cytoplasm. Required for maturation of 30S ribosomal subunits. The sequence is that of Ribosome maturation factor RimP from Pseudomonas fluorescens (strain ATCC BAA-477 / NRRL B-23932 / Pf-5).